We begin with the raw amino-acid sequence, 819 residues long: Leucine--tRNA ligase (819 aa).

The short motif at 40-51 (PYPSGAGLHVGH) is the 'HIGH' region element. Positions 600 to 604 (KMSKS) match the 'KMSKS' region motif. Residue lysine 603 coordinates ATP.

Belongs to the class-I aminoacyl-tRNA synthetase family.

It is found in the cytoplasm. It catalyses the reaction tRNA(Leu) + L-leucine + ATP = L-leucyl-tRNA(Leu) + AMP + diphosphate. The polypeptide is Leucine--tRNA ligase (Chlamydia trachomatis serovar L2 (strain ATCC VR-902B / DSM 19102 / 434/Bu)).